A 227-amino-acid chain; its full sequence is MAYPMQLGFQDATSPIMEELLHFHDHTLMIVFLISSLVLYIISLMLTTKLTHTSTMDAQEVETVWTILPAVILIMIALPSLRILYMMDEINNPSLTVKTMGHQWYWSYEYTDYEDLSFDSYMIPTSELKPGELRLLEVDNRVVLPMEMTIRVLVSSEDVLHSWAVPSLGLKTDAIPGRLNQTTLMSSRPGLYYGQCSEICGSNHSFMPIVLELVPLKHFEKWSASML.

The Mitochondrial intermembrane portion of the chain corresponds to 1–14 (MAYPMQLGFQDATS). Residues 15 to 45 (PIMEELLHFHDHTLMIVFLISSLVLYIISLM) form a helical membrane-spanning segment. Over 46–59 (LTTKLTHTSTMDAQ) the chain is Mitochondrial matrix. Residues 60–87 (EVETVWTILPAVILIMIALPSLRILYMM) form a helical membrane-spanning segment. Residues 88–227 (DEINNPSLTV…HFEKWSASML (140 aa)) lie on the Mitochondrial intermembrane side of the membrane. Residues His-161, Cys-196, Glu-198, Cys-200, His-204, and Met-207 each contribute to the Cu cation site. Glu-198 contacts Mg(2+).

Belongs to the cytochrome c oxidase subunit 2 family. As to quaternary structure, component of the cytochrome c oxidase (complex IV, CIV), a multisubunit enzyme composed of 14 subunits. The complex is composed of a catalytic core of 3 subunits MT-CO1, MT-CO2 and MT-CO3, encoded in the mitochondrial DNA, and 11 supernumerary subunits COX4I, COX5A, COX5B, COX6A, COX6B, COX6C, COX7A, COX7B, COX7C, COX8 and NDUFA4, which are encoded in the nuclear genome. The complex exists as a monomer or a dimer and forms supercomplexes (SCs) in the inner mitochondrial membrane with NADH-ubiquinone oxidoreductase (complex I, CI) and ubiquinol-cytochrome c oxidoreductase (cytochrome b-c1 complex, complex III, CIII), resulting in different assemblies (supercomplex SCI(1)III(2)IV(1) and megacomplex MCI(2)III(2)IV(2)). Found in a complex with TMEM177, COA6, COX18, COX20, SCO1 and SCO2. Interacts with TMEM177 in a COX20-dependent manner. Interacts with COX20. Interacts with COX16. Cu cation is required as a cofactor.

It is found in the mitochondrion inner membrane. The catalysed reaction is 4 Fe(II)-[cytochrome c] + O2 + 8 H(+)(in) = 4 Fe(III)-[cytochrome c] + 2 H2O + 4 H(+)(out). Component of the cytochrome c oxidase, the last enzyme in the mitochondrial electron transport chain which drives oxidative phosphorylation. The respiratory chain contains 3 multisubunit complexes succinate dehydrogenase (complex II, CII), ubiquinol-cytochrome c oxidoreductase (cytochrome b-c1 complex, complex III, CIII) and cytochrome c oxidase (complex IV, CIV), that cooperate to transfer electrons derived from NADH and succinate to molecular oxygen, creating an electrochemical gradient over the inner membrane that drives transmembrane transport and the ATP synthase. Cytochrome c oxidase is the component of the respiratory chain that catalyzes the reduction of oxygen to water. Electrons originating from reduced cytochrome c in the intermembrane space (IMS) are transferred via the dinuclear copper A center (CU(A)) of subunit 2 and heme A of subunit 1 to the active site in subunit 1, a binuclear center (BNC) formed by heme A3 and copper B (CU(B)). The BNC reduces molecular oxygen to 2 water molecules using 4 electrons from cytochrome c in the IMS and 4 protons from the mitochondrial matrix. This is Cytochrome c oxidase subunit 2 (MT-CO2) from Tragelaphus imberbis (Lesser kudu).